A 213-amino-acid polypeptide reads, in one-letter code: Ribonuclease HII (213 aa).

Residues 18 to 213 form the RNase H type-2 domain; sequence GLYAGVDEVG…RPVKERLAKN (196 aa). Residues Asp24, Glu25, and Asp116 each coordinate a divalent metal cation.

It belongs to the RNase HII family. It depends on Mn(2+) as a cofactor. Mg(2+) serves as cofactor.

It localises to the cytoplasm. The catalysed reaction is Endonucleolytic cleavage to 5'-phosphomonoester.. Functionally, endonuclease that specifically degrades the RNA of RNA-DNA hybrids. In Shewanella sediminis (strain HAW-EB3), this protein is Ribonuclease HII.